We begin with the raw amino-acid sequence, 243 residues long: Biosynthetic peptidoglycan transglycosylase (243 aa).

The helical transmembrane segment at 21–43 (LLIVSLVSALMSVLQVIVFRFVD) threads the bilayer.

Belongs to the glycosyltransferase 51 family.

The protein resides in the cell inner membrane. It carries out the reaction [GlcNAc-(1-&gt;4)-Mur2Ac(oyl-L-Ala-gamma-D-Glu-L-Lys-D-Ala-D-Ala)](n)-di-trans,octa-cis-undecaprenyl diphosphate + beta-D-GlcNAc-(1-&gt;4)-Mur2Ac(oyl-L-Ala-gamma-D-Glu-L-Lys-D-Ala-D-Ala)-di-trans,octa-cis-undecaprenyl diphosphate = [GlcNAc-(1-&gt;4)-Mur2Ac(oyl-L-Ala-gamma-D-Glu-L-Lys-D-Ala-D-Ala)](n+1)-di-trans,octa-cis-undecaprenyl diphosphate + di-trans,octa-cis-undecaprenyl diphosphate + H(+). It participates in cell wall biogenesis; peptidoglycan biosynthesis. Its function is as follows. Peptidoglycan polymerase that catalyzes glycan chain elongation from lipid-linked precursors. In Xylella fastidiosa (strain M12), this protein is Biosynthetic peptidoglycan transglycosylase.